We begin with the raw amino-acid sequence, 202 residues long: Snake venom metalloproteinase Ac1 (202 aa).

The Peptidase M12B domain occupies 6-202; that stretch reads RYMEIVIVVD…ENPPCILNKP (197 aa). The Ca(2+) site is built by E9 and D93. Disulfide bonds link C117–C197 and C157–C181. A Zn(2+)-binding site is contributed by H142. E143 is an active-site residue. Positions 146 and 152 each coordinate Zn(2+). C197 and N200 together coordinate Ca(2+).

It belongs to the venom metalloproteinase (M12B) family. P-I subfamily. As to quaternary structure, monomer. The cofactor is Zn(2+). As to expression, expressed by the venom gland.

Its subcellular location is the secreted. Snake venom metalloproteinase that impairs hemostasis in the envenomed animal. The polypeptide is Snake venom metalloproteinase Ac1 (Deinagkistrodon acutus (Hundred-pace snake)).